The sequence spans 155 residues: MRVRLIAVGNKMPKWVTEGYDEYAKRLPKDFALELVEIPMSPRGKNTDIPKAIRKEGDSMLEAIPSGDKVIAMEVLGKEWSTDQLADQTEQWRMDGYNVSLLVGGPDGLDPRCTARADQTWSLSRLTLPHPMVRVILAEQIYRAWTLMNNHPYHR.

S-adenosyl-L-methionine is bound by residues glycine 104 and 123 to 128 (LSRLTL).

Belongs to the RNA methyltransferase RlmH family. In terms of assembly, homodimer.

The protein localises to the cytoplasm. The catalysed reaction is pseudouridine(1915) in 23S rRNA + S-adenosyl-L-methionine = N(3)-methylpseudouridine(1915) in 23S rRNA + S-adenosyl-L-homocysteine + H(+). Functionally, specifically methylates the pseudouridine at position 1915 (m3Psi1915) in 23S rRNA. The chain is Ribosomal RNA large subunit methyltransferase H from Marinomonas sp. (strain MWYL1).